The chain runs to 161 residues: ATP synthase subunit b 1 (161 aa).

Residues 1–21 (MFATAEFWILACLVAFFAILG) traverse the membrane as a helical segment.

This sequence belongs to the ATPase B chain family. In terms of assembly, F-type ATPases have 2 components, F(1) - the catalytic core - and F(0) - the membrane proton channel. F(1) has five subunits: alpha(3), beta(3), gamma(1), delta(1), epsilon(1). F(0) has three main subunits: a(1), b(2) and c(10-14). The alpha and beta chains form an alternating ring which encloses part of the gamma chain. F(1) is attached to F(0) by a central stalk formed by the gamma and epsilon chains, while a peripheral stalk is formed by the delta and b chains.

It is found in the cell inner membrane. Functionally, f(1)F(0) ATP synthase produces ATP from ADP in the presence of a proton or sodium gradient. F-type ATPases consist of two structural domains, F(1) containing the extramembraneous catalytic core and F(0) containing the membrane proton channel, linked together by a central stalk and a peripheral stalk. During catalysis, ATP synthesis in the catalytic domain of F(1) is coupled via a rotary mechanism of the central stalk subunits to proton translocation. Its function is as follows. Component of the F(0) channel, it forms part of the peripheral stalk, linking F(1) to F(0). This Parvibaculum lavamentivorans (strain DS-1 / DSM 13023 / NCIMB 13966) protein is ATP synthase subunit b 1.